Consider the following 87-residue polypeptide: Large ribosomal subunit protein bL27 (87 aa).

The segment at 1–21 is disordered; it reads MAHKKAGGSSRNGRDSESKRL.

This sequence belongs to the bacterial ribosomal protein bL27 family.

In Paraburkholderia xenovorans (strain LB400), this protein is Large ribosomal subunit protein bL27.